The chain runs to 671 residues: DNA ligase (671 aa).

NAD(+)-binding positions include 36–40 (DAEYD), 85–86 (SL), and Glu116. The active-site N6-AMP-lysine intermediate is Lys118. Residues Arg139, Glu176, Lys292, and Lys316 each coordinate NAD(+). The Zn(2+) site is built by Cys410, Cys413, Cys428, and Cys434. The 81-residue stretch at 591–671 (QKGGRFQGMT…QFLAMFSEKE (81 aa)) folds into the BRCT domain.

Belongs to the NAD-dependent DNA ligase family. LigA subfamily. The cofactor is Mg(2+). It depends on Mn(2+) as a cofactor.

It carries out the reaction NAD(+) + (deoxyribonucleotide)n-3'-hydroxyl + 5'-phospho-(deoxyribonucleotide)m = (deoxyribonucleotide)n+m + AMP + beta-nicotinamide D-nucleotide.. In terms of biological role, DNA ligase that catalyzes the formation of phosphodiester linkages between 5'-phosphoryl and 3'-hydroxyl groups in double-stranded DNA using NAD as a coenzyme and as the energy source for the reaction. It is essential for DNA replication and repair of damaged DNA. The sequence is that of DNA ligase from Acidithiobacillus ferrooxidans (strain ATCC 23270 / DSM 14882 / CIP 104768 / NCIMB 8455) (Ferrobacillus ferrooxidans (strain ATCC 23270)).